Here is a 413-residue protein sequence, read N- to C-terminus: MSKRRVVVTGLGMLSPVGNTVESTWKALLAGQSGISLIDHFDTSAYATKFAGLVKDFNCEDIISRKEQRKMDAFIQYGIVAGVQAMQDSGLEITEENATRIGAAIGSGIGGLGLIEENHTSLMNGGPRKISPFFVPSTIVNMVAGHLTIMYGLRGPSISIATACTSGVHNIGHAARIIAYGDADVMVAGGAEKASTPLGVGGFGAARALSTRNDNPQAASRPWDKERDGFVLGDGAGMLVLEEYEHAKKRGAKIYAELVGFGMSSDAYHMTSPPENGAGAALAMANALRDAGIEASQIGYVNAHGTSTPAGDKAEAQAVKTIFGEAASRVLVSSTKSMTGHLLGAAGAVESIYSILALRDQAVPPTINLDNPDEGCDLDFVPHEARQVSGMEYTLCNSFGFGGTNGSLIFKKI.

The 410-residue stretch at 3–412 (KRRVVVTGLG…GTNGSLIFKK (410 aa)) folds into the Ketosynthase family 3 (KS3) domain. Active-site for beta-ketoacyl synthase activity residues include Cys164, His304, and His341.

This sequence belongs to the thiolase-like superfamily. Beta-ketoacyl-ACP synthases family. As to quaternary structure, homodimer.

It carries out the reaction a fatty acyl-[ACP] + malonyl-[ACP] + H(+) = a 3-oxoacyl-[ACP] + holo-[ACP] + CO2. The enzyme catalyses (9Z)-hexadecenoyl-[ACP] + malonyl-[ACP] + H(+) = 3-oxo-(11Z)-octadecenoyl-[ACP] + holo-[ACP] + CO2. Its pathway is lipid metabolism; fatty acid biosynthesis. Its function is as follows. Involved in the type II fatty acid elongation cycle. Catalyzes the elongation of a wide range of acyl-ACP by the addition of two carbons from malonyl-ACP to an acyl acceptor. Can efficiently catalyze the conversion of palmitoleoyl-ACP (cis-hexadec-9-enoyl-ACP) to cis-vaccenoyl-ACP (cis-octadec-11-enoyl-ACP), an essential step in the thermal regulation of fatty acid composition. The polypeptide is 3-oxoacyl-[acyl-carrier-protein] synthase 2 (fabF) (Escherichia coli O157:H7).